The chain runs to 190 residues: Peptidoglycan recognition protein 1 (190 aa).

The first 21 residues, 1–21 (MSRRYTPLAWVLLALLGLGAA), serve as a signal peptide directing secretion. Gln22 is modified (pyrrolidone carboxylic acid). 3 disulfides stabilise this stretch: Cys24/Cys148, Cys40/Cys85, and Cys61/Cys67. Positions 46 to 174 (QPVRYVVVSH…RDVQQTLSPG (129 aa)) constitute an N-acetylmuramoyl-L-alanine amidase domain.

This sequence belongs to the N-acetylmuramoyl-L-alanine amidase 2 family. Homodimer; disulfide-linked. In terms of tissue distribution, synthesized only in bone marrow. The mature protein is stored in the cytoplasmic granules of eosinophils and neutrophils but is absent from monocytes, lymphocytes, or platelets.

It is found in the secreted. Its subcellular location is the cytoplasmic granule. Functionally, innate immunity protein that plays several important functions in antimicrobial and antitumor defense systems. Acts as a pattern receptor that binds to murein peptidoglycans (PGN) of Gram-positive bacteria and thus provides bactericidal activity. Forms an equimolar complex with heat shock protein HSPA1A and induces programmed cell death through apoptosis and necroptosis in tumor cell lines by activating the TNFR1 receptor on the target cell membrane. In addition, acts in complex with the Ca(2+)-binding protein S100A4 as a chemoattractant able to induce lymphocyte movement. Mechanistically, this complex acts as a ligand of the chemotactic receptors CCR5 and CXCR3 which are present on the cells of the immune system. Also promotes the activation of lymphocytes that become able to kill virus-infected cells as well as tumor cells by modulating the spectrum of their target-cell specificity. Induction of cytotoxicity on monocyte surface requires interaction with TREM1 receptor. This is Peptidoglycan recognition protein 1 (PGLYRP1) from Bos taurus (Bovine).